The sequence spans 77 residues: Probable Fe(2+)-trafficking protein (77 aa).

It belongs to the Fe(2+)-trafficking protein family. As to quaternary structure, monomer.

Its function is as follows. Could be a mediator in iron transactions between iron acquisition and iron-requiring processes, such as synthesis and/or repair of Fe-S clusters in biosynthetic enzymes. The polypeptide is Probable Fe(2+)-trafficking protein (Buchnera aphidicola subsp. Acyrthosiphon pisum (strain APS) (Acyrthosiphon pisum symbiotic bacterium)).